A 236-amino-acid chain; its full sequence is Leucyl/phenylalanyl-tRNA--protein transferase (236 aa).

Belongs to the L/F-transferase family.

The protein localises to the cytoplasm. The catalysed reaction is N-terminal L-lysyl-[protein] + L-leucyl-tRNA(Leu) = N-terminal L-leucyl-L-lysyl-[protein] + tRNA(Leu) + H(+). It catalyses the reaction N-terminal L-arginyl-[protein] + L-leucyl-tRNA(Leu) = N-terminal L-leucyl-L-arginyl-[protein] + tRNA(Leu) + H(+). It carries out the reaction L-phenylalanyl-tRNA(Phe) + an N-terminal L-alpha-aminoacyl-[protein] = an N-terminal L-phenylalanyl-L-alpha-aminoacyl-[protein] + tRNA(Phe). In terms of biological role, functions in the N-end rule pathway of protein degradation where it conjugates Leu, Phe and, less efficiently, Met from aminoacyl-tRNAs to the N-termini of proteins containing an N-terminal arginine or lysine. The sequence is that of Leucyl/phenylalanyl-tRNA--protein transferase from Shewanella putrefaciens (strain CN-32 / ATCC BAA-453).